A 142-amino-acid chain; its full sequence is Large ribosomal subunit protein uL11 (142 aa).

Belongs to the universal ribosomal protein uL11 family. As to quaternary structure, part of the ribosomal stalk of the 50S ribosomal subunit. Interacts with L10 and the large rRNA to form the base of the stalk. L10 forms an elongated spine to which L12 dimers bind in a sequential fashion forming a multimeric L10(L12)X complex. Post-translationally, one or more lysine residues are methylated.

In terms of biological role, forms part of the ribosomal stalk which helps the ribosome interact with GTP-bound translation factors. This Mycoplasma mycoides subsp. mycoides SC (strain CCUG 32753 / NCTC 10114 / PG1) protein is Large ribosomal subunit protein uL11.